Reading from the N-terminus, the 1183-residue chain is MEEARAATNGGSGESQKLSNGEKSSQLEPGDVGNELLADIELEEDDYLDVVPPSPEEELPSFSPSVRNVSNIFKESPTDGRSAVHGTESEPELMAPKQPAAEQDSSAEHADKGLHLEQQLYSVMEDICKLVDAIPLHELTSISCAKELLQQRELRRKLLADSGALNTNSVNGPRNWKACVQQDPSSRPGTPLCSGPGRGVSSVGSTPKSTNLPSVLSRTVNSSSFSTIRNQTLDKLDTSYSSKETDQEVICLEPAALPSPKVNGKGSTSLSRPSEASFNGSWCEKPTGRDSGNWRVPERPTASTALKAQHTAPAGNPASGCWDVNDTDFDLDHFDIDDFDEGWEEAVAPEAAPEAPPAPQWQPLREGSASLRCRLLAAAAGSAPGPHPTAPKSGCGISAKSSSEPLVHNPAHERFRGMKFSHSEEMLKIFHRKFGLHSFRTNQLEAINAALLGEDCFILMPTGGGKSLCYQLPACVSAGVTVVISPLRSLIIDQVQKLKTLDIASTYLTGDITDADASKTYMQLSKKDPIIKLLYVTPEKVCASNRLLSALENLYNRKLLARFVIDEAHCVSQWGHDFRKDYKRLNMLRKKFHSVPMMALTATANPRVQKDIQNQLEMLKPQVFTMSFNRHNLKYDVLPKKPKKVAMDCLEWIKKYHPHDSGIIYCLSRHECDTTAAILQKEGLAALAYHAGLTDSNRDLVQKKWVNQEGCQVICATIAFGMGIDKPDVRYVIHASLPKSIEGYYQESGRAGRDGEMSHCLLFYSYSDVTRLRRLILMEKDGNSHTRQTHFNNLYSMVHYCENVVDCRRIQLLAYFGETDFNPNFCKDHPEVICDNCSRKKDYKSRNVTDEVKSIIRFVQQHCGQVGGINGNRNTGSGRYTLNMMVDIFLGAKSAKIQSGIFGKGAAYSRHNVERLFRKLVLDKILDEDLYITANDQAVAYVVLGEKAQAVLNGLLQVEFHETENASAIRKQRASVTKMSQREEMVKKCLGELTDTCKTLGKIFDVHYFNIFSTSTLKKIAETLSSDAEVLLQIDGVTEDKLEKYGAEIIKVMDKYSEWTTPEDAACQSVDTAPGSAGTPGSEEEAADDVVTSSYFGGNANQRRKRKRLPNSGESKRKKTSSGGSQQFYSKGARYRRARRAPGSRAAAPAQSSALRGAGARLGIMAPPKPSSRHFLQPSYAVL.

A disordered region spans residues Met1 to His109. The segment covering Glu14 to Leu27 has biased composition (polar residues). The segment covering Ala38 to Leu48 has biased composition (acidic residues). The interval Ala110–Ser162 is necessary for dimerization and homooligomerization. Disordered regions lie at residues Ala164–Val215, Pro260–Asp323, and Gly381–His408. Composition is skewed to polar residues over residues Thr206–Val215 and Lys265–Gly280. ATP contacts are provided by residues Phe439–Gln443 and Gly463–Ser467. Residues Ile447–Gln622 form the Helicase ATP-binding domain. Positions Asp566–His569 match the DEAH box motif. 3' overhang DNA-binding regions lie at residues Lys641–Lys644 and Ser668–His670. Positions Asp648–Tyr795 constitute a Helicase C-terminal domain. An ATP-binding site is contributed by Arg753. Residues Arg771–Arg774 form a 3' overhang DNA-binding region. Residues Cys807, Cys826, Cys834, and Cys837 each coordinate Zn(2+). Residues Gln865–Arg910 form a DNA Holliday junction binding region. 3' overhang DNA-binding stretches follow at residues Thr881–Asn883, Ala892–Lys896, and Tyr931–Gln937. Positions Glu983–Glu1063 constitute an HRDC domain. A necessary for ssDNA and DNA Holliday junction binding region spans residues Lys998–Ser1015. Residues Gln1068–Leu1183 are disordered. Over residues Val1091 to Asn1101 the composition is skewed to polar residues. The Nuclear localization signal signature appears at Arg1104–Thr1120. Over residues Ala1133–Pro1142 the composition is skewed to basic residues. Over residues Gly1143 to Ala1158 the composition is skewed to low complexity.

This sequence belongs to the helicase family. RecQ subfamily. As to quaternary structure, monomer. Homodimer (via N-terminus). Homotetramer (via N-terminus); dimer of dimers. Homohexamer (via N-terminus). Self-association negatively regulates DNA unwinding amplitude and rate. Oligomer complexes dissociate into monomer in presence of ATP. Zn(2+) is required as a cofactor.

Its subcellular location is the nucleus. It catalyses the reaction Couples ATP hydrolysis with the unwinding of duplex DNA by translocating in the 3'-5' direction.. The catalysed reaction is ATP + H2O = ADP + phosphate + H(+). Functionally, ATP-dependent DNA helicase that unwinds single- and double-stranded DNA in a 3'-5' direction. Participates in DNA replication and repair. Involved in 5'-end resection of DNA during double-strand break (DSB) repair. Negatively regulates sister chromatid exchange (SCE). Stimulates DNA 4-way junction branch migration and DNA Holliday junction dissolution. Binds DNA. Binds single-stranded DNA (ssDNA), forked duplex DNA and DNA Holliday junction. The sequence is that of RecQ-like DNA helicase BLM (BLM) from Gallus gallus (Chicken).